The primary structure comprises 2332 residues: Genome polyprotein (2332 aa).

Residues 1–201 (MHTTDCFIAL…WKAMVQRKLK (201 aa)) enclose the Peptidase C28 domain. The Cytoplasmic portion of the chain corresponds to 1–1480 (MHTTDCFIAL…SFVKRAFKRL (1480 aa)). Residues Cys-51, His-148, and Asp-163 each act as for leader protease activity in the active site. Disordered regions lie at residues 199-218 (KLKG…QSGN) and 238-265 (QLGD…NTQN). Gly-202 carries the N-myristoyl glycine; by host lipid modification. Polar residues-rich tracts occupy residues 204-218 (GQSS…QSGN) and 238-251 (QLGD…SNEG). Residues 252–265 (STDTTSTHTTNTQN) show a composition bias toward low complexity. An antigenic epitope region spans residues 789–797 (ALLRAATYY). Positions 868–870 (RGD) match the Cell attachment site motif. The region spanning 1189–1353 (NVHIANLCKV…DGYKINNKLD (165 aa)) is the SF3 helicase domain. 1217–1224 (GKSGQGKS) is a binding site for ATP. An intramembrane segment occupies 1481–1501 (KENFEIVALCLTLLANIVIMI). Over 1502 to 2332 (RETRKRQKMV…RWVNAVCGDA (831 aa)) the chain is Cytoplasmic. Composition is skewed to basic and acidic residues over residues 1529 to 1538 (KTLDEAEKNP) and 1549 to 1563 (FRER…RDDV). Positions 1529–1584 (KTLDEAEKNPLETSGASTVGFRERTLPGQKARDDVNSEPAQPAEEQPQAEGPYAGP) are disordered. Low complexity predominate over residues 1566-1578 (EPAQPAEEQPQAE). 3 positions are modified to O-(5'-phospho-RNA)-tyrosine: Tyr-1581, Tyr-1604, and Tyr-1628. Residues 1652 to 1848 (APPTDLQKMV…YCSCVSRSML (197 aa)) form the Peptidase C3 domain. Residue His-1695 is the For protease 3C activity; Proton donor/acceptor of the active site. Residues Asp-1733 and Cys-1812 each act as for protease 3C activity in the active site. The Nuclear localization signal motif lies at 1878-1886 (MRKTKLAPT). The RdRp catalytic domain maps to 2096 to 2214 (RNVWDVDYSA…ASDYDLDFEA (119 aa)). The For RdRp activity role is filled by Asp-2200.

The protein belongs to the picornaviruses polyprotein family. Interacts with host ISG15. Capsid protein VP1: Interacts (via R-G-D motif) with host ITGAV/ITGB6. As to quaternary structure, interacts (via R-G-D motif) with host ITGAV/ITGB6. Interacts with host MAVS; this interaction inhibits binding of host TRAF3 to MAVS, thereby suppressing interferon-mediated responses. In terms of assembly, forms homooligomers. Homohexamer. Interacts with host VIM. Interacts with host BECN1. As to quaternary structure, interacts with host DCTN3. In terms of assembly, interacts with RNA-dependent RNA polymerase; this interaction allows 3B-1 to binds 2 polymerases and act as a primer. It also allows the recruitment of the RNA-dependent RNA polymerase to host membranes. Interacts with RNA-dependent RNA polymerase; this interaction allows 3B-2 to act as a primer. As to quaternary structure, interacts with RNA-dependent RNA polymerase; this interaction allows 3B-3 to act as a primer. In terms of assembly, interacts with 3B-1; this interaction allows 3B-1 to binds 2 polymerases and act as a primer. It also allows the recruitment of the RNA-dependent RNA polymerase to host membranes. Interacts with 3B-2; this interaction allows 3B-2 to act as a primer. Interacts with 3B-3; this interaction allows 3B-3 to act as a primer. Post-translationally, removes six residues from its own C-terminus, generating sLb(pro). In terms of processing, specific enzymatic cleavages in vivo by the viral proteases yield a variety of precursors and mature proteins. The polyprotein seems to be cotranslationally cleaved at the 2A/2B junction by a ribosomal skip from one codon to the next without formation of a peptide bond. This process would release the L-P1-2A peptide from the translational complex. During virion maturation, immature virions are rendered infectious following cleavage of VP0 into VP4 and VP2. This maturation seems to be an autocatalytic event triggered by the presence of RNA in the capsid and is followed by a conformational change of the particle. Post-translationally, myristoylation is required during RNA encapsidation and formation of the mature virus particle. In terms of processing, uridylylated by the polymerase and covalently linked to the 5'-end of genomic RNA. These uridylylated forms act as a nucleotide-peptide primer for the polymerase.

The protein resides in the host nucleus. It localises to the host cytoplasm. The protein localises to the virion. It is found in the host endoplasmic reticulum membrane. Its subcellular location is the host cytoplasmic vesicle membrane. The catalysed reaction is Autocatalytically cleaves itself from the polyprotein of the foot-and-mouth disease virus by hydrolysis of a Lys-|-Gly bond, but then cleaves host cell initiation factor eIF-4G at bonds -Gly-|-Arg- and -Lys-|-Arg-.. It catalyses the reaction a ribonucleoside 5'-triphosphate + H2O = a ribonucleoside 5'-diphosphate + phosphate + H(+). The enzyme catalyses RNA(n) + a ribonucleoside 5'-triphosphate = RNA(n+1) + diphosphate. It carries out the reaction Selective cleavage of Gln-|-Gly bond in the poliovirus polyprotein. In other picornavirus reactions Glu may be substituted for Gln, and Ser or Thr for Gly.. Functionally, autocatalytically cleaves itself from the polyprotein at the L/VP0 junction. Also cleaves the host translation initiation factors EIF4G1 and EIF4G3, in order to shut off the capped cellular mRNA transcription. Plays a role in counteracting host innate antiviral response using diverse mechanisms. Possesses a deubiquitinase activity acting on both 'Lys-48' and 'Lys-63'-linked polyubiquitin chains. In turn, inhibits the ubiquitination and subsequent activation of key signaling molecules of type I IFN response such as host RIGI, TBK1, TRAF3 and TRAF6. Inhibits host NF-kappa-B activity by inducing a decrease in RELA mRNA levels. Cleaves a peptide bond in the C-terminus of host ISG15, resulting in the damaging of this modifier that can no longer be attached to target proteins. Also cleaves host G3BP1 and G3BP2 in order to inhibit cytoplasmic stress granules assembly. Lies on the inner surface of the capsid shell. After binding to the host receptor, the capsid undergoes conformational changes. Capsid protein VP4 is released, capsid protein VP1 N-terminus is externalized, and together, they shape a pore in the host membrane through which the viral genome is translocated into the host cell cytoplasm. After genome has been released, the channel shrinks. In terms of biological role, forms an icosahedral capsid of pseudo T=3 symmetry with capsid proteins VP1 and VP3. The capsid is composed of 60 copies of each capsid protein organized in the form of twelve pentamers and encloses the viral positive strand RNA genome. Upon acidifcation in the endosome, dissociates into pentamers. Its function is as follows. Forms an icosahedral capsid of pseudo T=3 symmetry with capsid proteins VP0 and VP3. The capsid is composed of 60 copies of each capsid protein organized in the form of twelve pentamers and encloses the viral positive strand RNA genome. Upon acidifcation in the endosome, dissociates into pentamers. Functionally, forms an icosahedral capsid of pseudo T=3 symmetry with capsid proteins VP2 and VP3. The capsid is composed of 60 copies of each capsid protein organized in the form of twelve pentamers and encloses the viral positive strand RNA genome. Mediates cell entry by attachment to an integrin receptor, usually host ITGAV/ITGB6. In addition, targets host MAVS to suppress type I IFN pathway. Upon acidifcation in the endosome, dissociates into pentamers. Mediates self-processing of the polyprotein by a translational effect termed 'ribosome skipping'. Mechanistically, 2A-mediated cleavage occurs between the C-terminal glycine and the proline of the downstream protein 2B. In the case of foot-and-mouth disease virus, the 2A oligopeptide is post-translationally 'trimmed' from the C-terminus of the upstream protein 1D by 3C proteinase. In terms of biological role, plays an essential role in the virus replication cycle by acting as a viroporin. Creates a pore in the host endoplasmic reticulum and as a consequence releases Ca2+ in the cytoplasm of infected cell. In turn, high levels of cytoplasmic calcium may trigger membrane trafficking and transport of viral ER-associated proteins to viroplasms, sites of viral genome replication. Its function is as follows. Associates with and induces structural rearrangements of intracellular membranes. Triggers host autophagy by interacting with host BECN1 and thereby promotes viral replication. Participates in viral replication and interacts with host DHX9. Displays RNA-binding, nucleotide binding and NTPase activities. May play a role in virion morphogenesis and viral RNA encapsidation by interacting with the capsid protein VP3. Functionally, plays important roles in virus replication, virulence and host range. Cooperates with host DDX56 to inhibit IRF3 nuclear translocation and subsequent type I interferon production. Covalently linked to the 5'-end of both the positive-strand and negative-strand genomic RNAs. Acts as a genome-linked replication primer. In terms of biological role, cysteine protease that generates mature viral proteins from the precursor polyprotein. In addition to its proteolytic activity, binds to viral RNA and thus influences viral genome replication. RNA and substrate bind cooperatively to the protease. Its function is as follows. RNA-directed RNA polymerase 3D-POL replicates genomic and antigenomic RNA by recognizing replications specific signals. Covalently attaches UMP to a tyrosine of VPg, which is used to prime RNA synthesis. The positive stranded RNA genome is first replicated at virus induced membranous vesicles, creating a dsRNA genomic replication form. This dsRNA is then used as template to synthesize positive stranded RNA genomes. ss(+)RNA genomes are either translated, replicated or encapsidated. This is Genome polyprotein from Foot-and-mouth disease virus (isolate -/Germany/A5Westerwald/1951 serotype A) (FMDV).